The primary structure comprises 346 residues: Elongation factor Ts (346 aa).

Residues 80–83 (TDFV) form an involved in Mg(2+) ion dislocation from EF-Tu region.

This sequence belongs to the EF-Ts family.

Its subcellular location is the cytoplasm. Associates with the EF-Tu.GDP complex and induces the exchange of GDP to GTP. It remains bound to the aminoacyl-tRNA.EF-Tu.GTP complex up to the GTP hydrolysis stage on the ribosome. This Streptococcus thermophilus (strain CNRZ 1066) protein is Elongation factor Ts.